The sequence spans 210 residues: SAP domain-containing ribonucleoprotein (210 aa).

Ala-2 bears the N-acetylalanine mark. The SAP domain maps to 8–42 (LHKLKLAELKQECLARGLETKGIKQDLINRLQAYL). Residue Lys-10 is modified to N6-acetyllysine. The segment covering 45–64 (HAEEEANEEDVLGDETEEEE) has biased composition (acidic residues). Positions 45 to 87 (HAEEEANEEDVLGDETEEEEPKPIELPVKEEEPPEKVVDMASE) are disordered. Residues 65-87 (PKPIELPVKEEEPPEKVVDMASE) show a composition bias toward basic and acidic residues. The residue at position 142 (Lys-142) is an N6-acetyllysine. Residues 161 to 210 (VSSISRKSEDDEKLKKRKERFGIVTSSAGTGTTEDTEAKKRKRAERFGIA) are disordered. Ser-163 bears the Phosphoserine mark. Positions 184–193 (VTSSAGTGTT) are enriched in polar residues.

Belongs to the SAP domain-containing ribonucleoprotein family. Interacts with DDX39A. Interacts with FUS. Interacts (via the C-terminal domain) with DDX39B; the interaction is direct and facilitates RNA binding of DDX39B. Component of the transcription/export (TREX) complex at least composed of ALYREF/THOC4, DDX39B, SARNP/CIP29, CHTOP and the THO subcomplex; TREX seems to have dynamic structure involving ATP-dependent remodeling; in the complex interacts directly with DDX39B in a ATP-dependent manner which bridges it to ALYREF/THOC4.

It localises to the nucleus. The protein localises to the nucleus speckle. Binds both single-stranded and double-stranded DNA with higher affinity for the single-stranded form. Specifically binds to scaffold/matrix attachment region DNA. Also binds single-stranded RNA. Enhances RNA unwinding activity of DDX39A. May participate in important transcriptional or translational control of cell growth, metabolism and carcinogenesis. Component of the TREX complex which is thought to couple mRNA transcription, processing and nuclear export, and specifically associates with spliced mRNA and not with unspliced pre-mRNA. The TREX complex is recruited to spliced mRNAs by a transcription-independent mechanism, binds to mRNA upstream of the exon-junction complex (EJC) and is recruited in a splicing- and cap-dependent manner to a region near the 5' end of the mRNA where it functions in mRNA export to the cytoplasm via the TAP/NXF1 pathway. Associates with DDX39B, which facilitates RNA binding of DDX39B and likely plays a role in mRNA export. The polypeptide is SAP domain-containing ribonucleoprotein (Sarnp) (Rattus norvegicus (Rat)).